The following is a 380-amino-acid chain: Transaldolase (380 aa).

Lysine 141 functions as the Schiff-base intermediate with substrate in the catalytic mechanism.

It belongs to the transaldolase family. Type 2 subfamily.

It is found in the cytoplasm. It catalyses the reaction D-sedoheptulose 7-phosphate + D-glyceraldehyde 3-phosphate = D-erythrose 4-phosphate + beta-D-fructose 6-phosphate. Its pathway is carbohydrate degradation; pentose phosphate pathway; D-glyceraldehyde 3-phosphate and beta-D-fructose 6-phosphate from D-ribose 5-phosphate and D-xylulose 5-phosphate (non-oxidative stage): step 2/3. Transaldolase is important for the balance of metabolites in the pentose-phosphate pathway. This is Transaldolase from Trichodesmium erythraeum (strain IMS101).